The sequence spans 266 residues: Putative cysteine-rich repeat secretory protein 20 (266 aa).

A signal peptide spans 1–33 (MYFPPSSVPKRLVLVHISAVVAIKLLLIRSVSS). Gnk2-homologous domains follow at residues 40 to 142 (YLQH…SIRN) and 148 to 261 (YNNN…LYPF).

This sequence belongs to the cysteine-rich repeat secretory protein family.

It is found in the secreted. The sequence is that of Putative cysteine-rich repeat secretory protein 20 (CRRSP20) from Arabidopsis thaliana (Mouse-ear cress).